Here is an 817-residue protein sequence, read N- to C-terminus: Exocyst complex component 6 (817 aa).

2 coiled-coil regions span residues 87–149 and 247–270; these read QSFV…DQIA and TDAE…EIEV.

The protein belongs to the SEC15 family. The exocyst complex is composed of sec-3/exoc1, sec-5/exoc2, sec-6/exoc3, sec-8/exoc4, sec-10/exoc5, sec-15/exoc6, exo-70/exoc7 and exo-84/exoc8.

Functionally, component of the exocyst complex involved in the docking of exocytic vesicles with fusion sites on the plasma membrane. The polypeptide is Exocyst complex component 6 (sec-15) (Caenorhabditis elegans).